The primary structure comprises 684 residues: Glycine--tRNA ligase beta subunit (684 aa).

It belongs to the class-II aminoacyl-tRNA synthetase family. As to quaternary structure, tetramer of two alpha and two beta subunits.

The protein localises to the cytoplasm. It catalyses the reaction tRNA(Gly) + glycine + ATP = glycyl-tRNA(Gly) + AMP + diphosphate. The polypeptide is Glycine--tRNA ligase beta subunit (Pseudomonas putida (strain ATCC 47054 / DSM 6125 / CFBP 8728 / NCIMB 11950 / KT2440)).